We begin with the raw amino-acid sequence, 275 residues long: DNA polymerase II subunit B4 (275 aa).

Residues 11–17 mediate DNA binding; that stretch reads LPLAIVR. Positions 112-122 are enriched in low complexity; it reads ASYPAGGAALK. Residues 112–275 form a disordered region; sequence ASYPAGGAAL…EEVESDEEDE (164 aa). The Nuclear localization signal signature appears at 135–142; it reads KKRKQEEP. Residues 151-161 are compositionally biased toward basic and acidic residues; the sequence is SKIDEETKRND. Positions 152 to 179 form a coiled coil; the sequence is KIDEETKRNDEETENDNTEEENGNDEED. Composition is skewed to acidic residues over residues 162–237 and 266–275; these read EETE…EESG and EEVESDEEDE.

Belongs to the NFYB/HAP3 subunit family. As to quaternary structure, heterotrimeric transcription factor composed of three components, NF-YA, NF-YB and NF-YC. NF-YB and NF-YC must interact and dimerize for NF-YA association and DNA binding. Binds directly with DPB3-1.

Its subcellular location is the nucleus. Component of the NF-Y/HAP transcription factor complex. The NF-Y complex stimulates the transcription of various genes by recognizing and binding to a CCAAT motif in promoters. The chain is DNA polymerase II subunit B4 from Arabidopsis thaliana (Mouse-ear cress).